A 408-amino-acid chain; its full sequence is 3-phosphoshikimate 1-carboxyvinyltransferase (408 aa).

Residues K10, S11, and R15 each contribute to the 3-phosphoshikimate site. Residue K10 participates in phosphoenolpyruvate binding. Phosphoenolpyruvate contacts are provided by G79 and R107. Residues S150, S151, Q152, S179, E297, and H324 each coordinate 3-phosphoshikimate. Q152 contributes to the phosphoenolpyruvate binding site. E297 functions as the Proton acceptor in the catalytic mechanism. Residues R328, R369, and K394 each contribute to the phosphoenolpyruvate site.

The protein belongs to the EPSP synthase family. As to quaternary structure, monomer.

Its subcellular location is the cytoplasm. It carries out the reaction 3-phosphoshikimate + phosphoenolpyruvate = 5-O-(1-carboxyvinyl)-3-phosphoshikimate + phosphate. The protein operates within metabolic intermediate biosynthesis; chorismate biosynthesis; chorismate from D-erythrose 4-phosphate and phosphoenolpyruvate: step 6/7. Functionally, catalyzes the transfer of the enolpyruvyl moiety of phosphoenolpyruvate (PEP) to the 5-hydroxyl of shikimate-3-phosphate (S3P) to produce enolpyruvyl shikimate-3-phosphate and inorganic phosphate. The polypeptide is 3-phosphoshikimate 1-carboxyvinyltransferase (Corynebacterium efficiens (strain DSM 44549 / YS-314 / AJ 12310 / JCM 11189 / NBRC 100395)).